The following is a 342-amino-acid chain: Galactose mutarotase (342 aa).

Ala-2 carries the N-acetylalanine modification. Ser-14 is modified (phosphoserine). Beta-D-galactose-binding positions include 81–82 and His-107; that span reads NR. Ser-124 is subject to Phosphoserine. The active-site Proton donor is His-176. Residues 176–178, Asp-243, Gln-279, and Glu-307 contribute to the beta-D-galactose site; that span reads HSY. The Proton acceptor role is filled by Glu-307.

This sequence belongs to the aldose epimerase family. Monomer.

The protein localises to the cytoplasm. It carries out the reaction alpha-D-galactose = beta-D-galactose. It catalyses the reaction alpha-D-glucose = beta-D-glucose. The protein operates within carbohydrate metabolism; hexose metabolism. Its pathway is carbohydrate metabolism; galactose metabolism. In terms of biological role, mutarotase that catalyzes the interconversion of beta-D-galactose and alpha-D-galactose during galactose metabolism. Beta-D-galactose is metabolized in the liver into glucose 1-phosphate, the primary metabolic fuel, by the action of four enzymes that constitute the Leloir pathway: GALM, GALK1 (galactokinase), GALT (galactose-1-phosphate uridylyltransferase) and GALE (UDP-galactose-4'-epimerase). Involved in the maintenance of the equilibrium between the beta- and alpha-anomers of galactose, therefore ensuring a sufficient supply of the alpha-anomer for GALK1. Also active on D-glucose although shows a preference for galactose over glucose. The protein is Galactose mutarotase (GALM) of Pongo abelii (Sumatran orangutan).